Reading from the N-terminus, the 337-residue chain is Homeobox protein knotted-1-like 4 (337 aa).

Disordered stretches follow at residues 1 to 56 and 159 to 190; these read MEQQ…SFHE and FTLD…GLPE. Residues 27–38 are compositionally biased toward low complexity; it reads PTSTSTSPAVPS. Positions 200–220 constitute an ELK domain; it reads ELKSHLLNKYSGYLSSLWREL. The homeobox; TALE-type DNA-binding region spans 221–284; that stretch reads SKKKKKGKLP…NQRKRHWKPT (64 aa).

This sequence belongs to the TALE/KNOX homeobox family.

The protein localises to the nucleus. The protein is Homeobox protein knotted-1-like 4 (OSH10) of Oryza sativa subsp. japonica (Rice).